A 102-amino-acid polypeptide reads, in one-letter code: Large ribosomal subunit protein uL24 (102 aa).

The protein belongs to the universal ribosomal protein uL24 family. As to quaternary structure, part of the 50S ribosomal subunit.

In terms of biological role, one of two assembly initiator proteins, it binds directly to the 5'-end of the 23S rRNA, where it nucleates assembly of the 50S subunit. Its function is as follows. One of the proteins that surrounds the polypeptide exit tunnel on the outside of the subunit. The sequence is that of Large ribosomal subunit protein uL24 from Rhizobium leguminosarum bv. trifolii (strain WSM2304).